The sequence spans 363 residues: Ribosomal RNA small subunit methyltransferase H (363 aa).

S-adenosyl-L-methionine is bound by residues 55–57 (GGH), D75, D122, and Q129.

This sequence belongs to the methyltransferase superfamily. RsmH family.

The protein localises to the cytoplasm. It carries out the reaction cytidine(1402) in 16S rRNA + S-adenosyl-L-methionine = N(4)-methylcytidine(1402) in 16S rRNA + S-adenosyl-L-homocysteine + H(+). Specifically methylates the N4 position of cytidine in position 1402 (C1402) of 16S rRNA. The sequence is that of Ribosomal RNA small subunit methyltransferase H from Bordetella petrii (strain ATCC BAA-461 / DSM 12804 / CCUG 43448).